A 300-amino-acid polypeptide reads, in one-letter code: MNQESSFRAPPKRRVRGPNPNISTPHQLFDDTSGGPVPHGGEYPNHSSPALGIPAQAFLSEPMSNFAMAYGSSLASQGKEMMDKNIDRIIPVSKIKYYFAVDTVYVGKKIGLLMFPYMHQDWEVRYQQDTPVAPRFDINAPDLYIPVMAFITYILVAGLALGTQSRFSPEILGMQASSALAWLIVEVLAILLSLYLVTVNTDLTTVDLVAFSGYKYVGMISGVISGLLFGKTGYYVVLSWCGISVVFFMIRTLRLKILSEAAAEGVLVRGARNQLRMYLTMAIAAVQPIFMYWLTYHLVR.

The disordered stretch occupies residues 1–46 (MNQESSFRAPPKRRVRGPNPNISTPHQLFDDTSGGPVPHGGEYPNH). Topologically, residues 1-142 (MNQESSFRAP…APRFDINAPD (142 aa)) are cytoplasmic. Residues 143–163 (LYIPVMAFITYILVAGLALGT) traverse the membrane as a helical segment. At 164-178 (QSRFSPEILGMQASS) the chain is on the extracellular side. A helical transmembrane segment spans residues 179–199 (ALAWLIVEVLAILLSLYLVTV). Residues 200–205 (NTDLTT) lie on the Cytoplasmic side of the membrane. Residues 206 to 226 (VDLVAFSGYKYVGMISGVISG) form a helical membrane-spanning segment. Position 227 (L227) is a topological domain, extracellular. Residues 228 to 248 (LFGKTGYYVVLSWCGISVVFF) form a helical membrane-spanning segment. Topologically, residues 249-278 (MIRTLRLKILSEAAAEGVLVRGARNQLRMY) are cytoplasmic. The chain crosses the membrane as a helical span at residues 279–299 (LTMAIAAVQPIFMYWLTYHLV). Residue R300 is a topological domain, extracellular.

This sequence belongs to the YIF1 family.

Its subcellular location is the endoplasmic reticulum membrane. It is found in the golgi apparatus membrane. The protein localises to the endoplasmic reticulum-Golgi intermediate compartment membrane. Its function is as follows. Functions in endoplasmic reticulum to Golgi vesicle-mediated transport and regulates the proper organization of the endoplasmic reticulum and the Golgi. Plays a key role in targeting to neuronal dendrites receptors such as HTR1A. Plays also a role in primary cilium and sperm flagellum assembly probably through protein transport to these compartments. The chain is Protein YIF1B (yif1b) from Xenopus tropicalis (Western clawed frog).